A 578-amino-acid polypeptide reads, in one-letter code: Adhesion G protein-coupled receptor A1 (578 aa).

Over 1-22 (MTQWDLKTVLSLPQYPGEFLHP) the chain is Extracellular. Residues 23–43 (VVYACTAVMLLCLLASVITYI) form a helical membrane-spanning segment. Residues 44 to 56 (LHQSAIRISRKGR) are Cytoplasmic-facing. The chain crosses the membrane as a helical span at residues 57–77 (HALLNFCFHAALTFTVFAGGI). At 78 to 87 (NRTQHPILCQ) the chain is on the extracellular side. The chain crosses the membrane as a helical span at residues 88–108 (AVGIALHYSTLSTMLWIGVTA). At 109 to 137 (RNIYKQVTKKALPCPGADQPPYPKQPLLR) the chain is on the cytoplasmic side. A helical membrane pass occupies residues 138–158 (FYLISGGVPFIICGVTAATNI). Over 159-178 (RNYGTEDEDVAYCWMAWEPS) the chain is Extracellular. Residues 179–199 (LGAFYGPAAFIALVTCVYFLC) traverse the membrane as a helical segment. Topologically, residues 200-262 (TYVQLRRHPE…NEHSFKAQLR (63 aa)) are cytoplasmic. Positions 216–236 (ERTEEQQRLAVPESGHRHGVR) are disordered. Residues 263–283 (AAAFTLFLFTATWTFGALAVS) traverse the membrane as a helical segment. The Extracellular segment spans residues 284 to 289 (QGHFLD). A helical membrane pass occupies residues 290-310 (MIFSCLYGAFCVTLGLFVLIH). Disordered regions lie at residues 463-486 (PSSL…EGPM) and 537-578 (SLPF…ETTV). The segment covering 469–481 (SPHSSRSESPTSS) has biased composition (low complexity). The segment covering 537 to 548 (SLPFGGPSQNGL) has biased composition (polar residues).

This sequence belongs to the G-protein coupled receptor 2 family. Adhesion G-protein coupled receptor (ADGR) subfamily. In terms of tissue distribution, predominantly expressed in CNS.

Its subcellular location is the membrane. The protein is Adhesion G protein-coupled receptor A1 of Mus musculus (Mouse).